Here is a 400-residue protein sequence, read N- to C-terminus: Enolase (400 aa).

(2R)-2-phosphoglycerate is bound at residue Gln153. Catalysis depends on Glu195, which acts as the Proton donor. Mg(2+) contacts are provided by Asp231, Glu274, and Asp301. (2R)-2-phosphoglycerate-binding residues include Lys326, Arg355, Ser356, and Lys377. Lys326 functions as the Proton acceptor in the catalytic mechanism.

This sequence belongs to the enolase family. Mg(2+) serves as cofactor.

It is found in the cytoplasm. The protein resides in the secreted. The protein localises to the cell surface. It catalyses the reaction (2R)-2-phosphoglycerate = phosphoenolpyruvate + H2O. It participates in carbohydrate degradation; glycolysis; pyruvate from D-glyceraldehyde 3-phosphate: step 4/5. Functionally, catalyzes the reversible conversion of 2-phosphoglycerate (2-PG) into phosphoenolpyruvate (PEP). It is essential for the degradation of carbohydrates via glycolysis. The chain is Enolase from Halorubrum lacusprofundi (strain ATCC 49239 / DSM 5036 / JCM 8891 / ACAM 34).